Consider the following 90-residue polypeptide: Putative large ribosomal subunit protein uL23c (90 aa).

The segment at 1–46 is coded by first part of gene; sequence MDGIKYAVFTDKSIQLLGKKQYTSNVESRSTRTEIKHWVELWNSYE. The tract at residues 47-90 is coded by second part of gene; it reads MNSHRLPGKGRRMGPIMGHTMHYRRMIITLQSSYSIPPLRKKRT.

Belongs to the universal ribosomal protein uL23 family. Part of the 50S ribosomal subunit.

It localises to the plastid. The protein resides in the chloroplast. Functionally, binds to 23S rRNA. In Spinacia oleracea (Spinach), this protein is Putative large ribosomal subunit protein uL23c (rpl23).